The chain runs to 256 residues: Small ribosomal subunit protein uS2 (256 aa).

This sequence belongs to the universal ribosomal protein uS2 family.

The chain is Small ribosomal subunit protein uS2 from Streptococcus agalactiae serotype Ia (strain ATCC 27591 / A909 / CDC SS700).